Consider the following 139-residue polypeptide: Trafficking protein particle complex subunit 2-like protein (139 aa).

This sequence belongs to the TRAPP small subunits family. Sedlin subfamily.

Its subcellular location is the cytoplasm. It is found in the perinuclear region. The protein localises to the endoplasmic reticulum. The protein resides in the golgi apparatus. In terms of biological role, may play a role in vesicular transport from endoplasmic reticulum to Golgi. The sequence is that of Trafficking protein particle complex subunit 2-like protein (TRAPPC2L) from Taeniopygia guttata (Zebra finch).